Reading from the N-terminus, the 344-residue chain is Anthranilate phosphoribosyltransferase (344 aa).

5-phospho-alpha-D-ribose 1-diphosphate-binding positions include Gly-86, 89–90 (GD), Thr-94, 96–99 (NIST), 114–122 (KHGNKSASG), and Ser-126. Gly-86 is an anthranilate binding site. Ser-98 serves as a coordination point for Mg(2+). Residue Asn-117 coordinates anthranilate. Position 172 (Arg-172) interacts with anthranilate. Mg(2+) is bound by residues Asp-231 and Glu-232.

Belongs to the anthranilate phosphoribosyltransferase family. In terms of assembly, homodimer. Requires Mg(2+) as cofactor.

The catalysed reaction is N-(5-phospho-beta-D-ribosyl)anthranilate + diphosphate = 5-phospho-alpha-D-ribose 1-diphosphate + anthranilate. It participates in amino-acid biosynthesis; L-tryptophan biosynthesis; L-tryptophan from chorismate: step 2/5. Catalyzes the transfer of the phosphoribosyl group of 5-phosphorylribose-1-pyrophosphate (PRPP) to anthranilate to yield N-(5'-phosphoribosyl)-anthranilate (PRA). The protein is Anthranilate phosphoribosyltransferase of Prochlorococcus marinus (strain MIT 9301).